A 138-amino-acid chain; its full sequence is Putative pre-16S rRNA nuclease (138 aa).

It belongs to the YqgF nuclease family.

The protein localises to the cytoplasm. Its function is as follows. Could be a nuclease involved in processing of the 5'-end of pre-16S rRNA. The polypeptide is Putative pre-16S rRNA nuclease (Escherichia coli O7:K1 (strain IAI39 / ExPEC)).